Reading from the N-terminus, the 466-residue chain is MITLYNTLTRQKEVFKPIEPGKVKMYVCGPTVYNYIHIGNARPAINYDVVRRYFEYQGYNVEYVSNFTDVDDKLIKRSQELNQSVPEIAEKYIAAFHEDVGALNVRKATSNPRVMDHMDDIIQFIKDLVDRGYAYESGGDVYFRTRKFEGYGKLSHQSIDDLKVGARIDAGEHKEDALDFTLWKKAKPGEISWDSPFGEGRPGWHIECSVMAFHELGPTIDIHAGGSDLQFPHHENEIAQSEAHNHAPFANYWMHNGFINIDNEKMSKSLGNFILVHDIIKEVDPDVLRFFMISVHYRSPINYNLELVESARSGLERIRNSYQLIEERAQIATNIENQQTYIDQIDAILNRFETVMNDDFNTANAITAWYDLAKLANKYVLENTTSTEVIDKFKAVYQIFSDVLGVPLKSKNADELLDEDVEKLIEERNEARKNKDFARADEIRDMLKSQNIILEDTPQGVRFKRG.

Zn(2+) is bound at residue cysteine 28. The 'HIGH' region signature appears at 30–40 (PTVYNYIHIGN). The Zn(2+) site is built by cysteine 208, histidine 233, and glutamate 237. Residues 265 to 269 (KMSKS) carry the 'KMSKS' region motif. Lysine 268 provides a ligand contact to ATP.

The protein belongs to the class-I aminoacyl-tRNA synthetase family. As to quaternary structure, monomer. Zn(2+) serves as cofactor.

Its subcellular location is the cytoplasm. The enzyme catalyses tRNA(Cys) + L-cysteine + ATP = L-cysteinyl-tRNA(Cys) + AMP + diphosphate. The polypeptide is Cysteine--tRNA ligase (Staphylococcus aureus (strain MSSA476)).